Reading from the N-terminus, the 978-residue chain is Glycine dehydrogenase (decarboxylating) (978 aa).

Residue K726 is modified to N6-(pyridoxal phosphate)lysine.

This sequence belongs to the GcvP family. As to quaternary structure, the glycine cleavage system is composed of four proteins: P, T, L and H. Pyridoxal 5'-phosphate serves as cofactor.

The enzyme catalyses N(6)-[(R)-lipoyl]-L-lysyl-[glycine-cleavage complex H protein] + glycine + H(+) = N(6)-[(R)-S(8)-aminomethyldihydrolipoyl]-L-lysyl-[glycine-cleavage complex H protein] + CO2. In terms of biological role, the glycine cleavage system catalyzes the degradation of glycine. The P protein binds the alpha-amino group of glycine through its pyridoxal phosphate cofactor; CO(2) is released and the remaining methylamine moiety is then transferred to the lipoamide cofactor of the H protein. The protein is Glycine dehydrogenase (decarboxylating) of Paraburkholderia phytofirmans (strain DSM 17436 / LMG 22146 / PsJN) (Burkholderia phytofirmans).